We begin with the raw amino-acid sequence, 202 residues long: Proteasome subunit beta 1 (202 aa).

The propeptide at 1-8 (MGEVVLPG) is removed in mature form; by autocatalysis. Thr9 functions as the Nucleophile in the catalytic mechanism.

Belongs to the peptidase T1B family. As to quaternary structure, the 20S proteasome core is composed of 14 alpha and 14 beta subunits that assemble into four stacked heptameric rings, resulting in a barrel-shaped structure. The two inner rings, each composed of seven catalytic beta subunits, are sandwiched by two outer rings, each composed of seven alpha subunits. The catalytic chamber with the active sites is on the inside of the barrel. Has a gated structure, the ends of the cylinder being occluded by the N-termini of the alpha-subunits. Is capped at one or both ends by the proteasome regulatory ATPase, PAN.

It localises to the cytoplasm. The enzyme catalyses Cleavage of peptide bonds with very broad specificity.. With respect to regulation, the formation of the proteasomal ATPase PAN-20S proteasome complex, via the docking of the C-termini of PAN into the intersubunit pockets in the alpha-rings, triggers opening of the gate for substrate entry. Interconversion between the open-gate and close-gate conformations leads to a dynamic regulation of the 20S proteasome proteolysis activity. Its function is as follows. Component of the proteasome core, a large protease complex with broad specificity involved in protein degradation. The chain is Proteasome subunit beta 1 from Desulfurococcus amylolyticus (strain DSM 18924 / JCM 16383 / VKM B-2413 / 1221n) (Desulfurococcus kamchatkensis).